Here is a 485-residue protein sequence, read N- to C-terminus: Probable glycine dehydrogenase (decarboxylating) subunit 2 (485 aa).

At lysine 273 the chain carries N6-(pyridoxal phosphate)lysine.

Belongs to the GcvP family. C-terminal subunit subfamily. In terms of assembly, the glycine cleavage system is composed of four proteins: P, T, L and H. In this organism, the P 'protein' is a heterodimer of two subunits. The cofactor is pyridoxal 5'-phosphate.

It carries out the reaction N(6)-[(R)-lipoyl]-L-lysyl-[glycine-cleavage complex H protein] + glycine + H(+) = N(6)-[(R)-S(8)-aminomethyldihydrolipoyl]-L-lysyl-[glycine-cleavage complex H protein] + CO2. In terms of biological role, the glycine cleavage system catalyzes the degradation of glycine. The P protein binds the alpha-amino group of glycine through its pyridoxal phosphate cofactor; CO(2) is released and the remaining methylamine moiety is then transferred to the lipoamide cofactor of the H protein. The polypeptide is Probable glycine dehydrogenase (decarboxylating) subunit 2 (Oceanobacillus iheyensis (strain DSM 14371 / CIP 107618 / JCM 11309 / KCTC 3954 / HTE831)).